Here is a 478-residue protein sequence, read N- to C-terminus: Dihydrolipoyl dehydrogenase (478 aa).

Residues Glu34–Cys49, Lys58, and Gly122 contribute to the FAD site. The cysteines at positions 49 and 54 are disulfide-linked. NAD(+)-binding positions include Gly188–Ile192, Glu211, Val245, and Ala276–Arg279. FAD contacts are provided by Asp319 and Ala327. Catalysis depends on His451, which acts as the Proton acceptor.

The protein belongs to the class-I pyridine nucleotide-disulfide oxidoreductase family. In terms of assembly, homodimer. FAD is required as a cofactor.

Its subcellular location is the cytoplasm. It carries out the reaction N(6)-[(R)-dihydrolipoyl]-L-lysyl-[protein] + NAD(+) = N(6)-[(R)-lipoyl]-L-lysyl-[protein] + NADH + H(+). In terms of biological role, the branched-chain alpha-keto dehydrogenase complex catalyzes the overall conversion of alpha-keto acids to acyl-CoA and CO(2). It contains multiple copies of 3 enzymatic components: branched-chain alpha-keto acid decarboxylase (E1), lipoamide acyltransferase (E2) and lipoamide dehydrogenase (E3). The chain is Dihydrolipoyl dehydrogenase (lpd) from Pseudomonas fluorescens.